Here is a 205-residue protein sequence, read N- to C-terminus: QQIPPEVSSQITDALTQGLLDGNFLSLLNAINLEGLLNTILDQVTGLLNILVGPLLGSSNAEIKLQDARLLQLSLEFSPDSKGIDIWIPLELSVYLKLLILEPLTLYVRTDIRAQLQLESDEDGKYRLAFGHCTLLPRAIELQTGNPLSLTVNAVLGTIENTLGNFITEDLGAGLCPTLNSLVSNLNLQLVNNLINLILDRANVD.

A disulfide bridge connects residues Cys133 and Cys176.

Belongs to the BPI/LBP/Plunc superfamily. Plunc family. Monomer.

It localises to the secreted. In terms of biological role, major protein in sweat, has surfactant properties. The sequence is that of Latherin (LATH) from Equus quagga burchellii (Burchell's zebra).